We begin with the raw amino-acid sequence, 120 residues long: Large ribosomal subunit protein bL12 (120 aa).

The protein belongs to the bacterial ribosomal protein bL12 family. As to quaternary structure, homodimer. Part of the ribosomal stalk of the 50S ribosomal subunit. Forms a multimeric L10(L12)X complex, where L10 forms an elongated spine to which 2 to 4 L12 dimers bind in a sequential fashion. Binds GTP-bound translation factors.

In terms of biological role, forms part of the ribosomal stalk which helps the ribosome interact with GTP-bound translation factors. Is thus essential for accurate translation. This is Large ribosomal subunit protein bL12 from Lactobacillus helveticus (strain DPC 4571).